A 496-amino-acid chain; its full sequence is Nitric oxide synthase, inducible (496 aa).

FMN is bound by residues C6, E32, and Q36. The region spanning 101 to 341 (KNLFTMRLRS…VRSVSGFQLP (241 aa)) is the FAD-binding FR-type domain. R121 is a binding site for NADP(+). Positions 143, 277, 279, 280, 295, and 297 each coordinate FAD. An NADP(+)-binding site is contributed by T300. Residues Y301, V314, C315, and S316 each coordinate FAD. T355, R388, S417, R418, K424, Y426, Q428, and D461 together coordinate NADP(+).

It belongs to the NOS family. As to quaternary structure, homodimer. Interacts with NHERF1. Interacts with GAPDH; induced by oxidatively-modified low-densitity lipoprotein (LDL(ox)). Interacts with S100A8 and S100A9 to form the iNOS-S100A8/9 transnitrosylase complex. Interacts with SPSB1, SPSB2 and SPSB4. Interacts with ELOC and CUL5 in the presence of SPSB1 or SPSB2 or SPSB4. Forms a complex with ASL, ASS1 and HSP90AA1; the complex regulates cell-autonomous L-arginine synthesis and citrulline recycling while channeling extracellular L-arginine to nitric oxide synthesis pathway. The cofactor is heme b. FAD is required as a cofactor. Requires FMN as cofactor. It depends on (6R)-L-erythro-5,6,7,8-tetrahydrobiopterin as a cofactor. In terms of processing, polyubiquitinated; mediated by SPSB1, SPSB2 and SPSB4, leading to proteasomal degradation.

The protein resides in the cytoplasm. Its subcellular location is the cytosol. It carries out the reaction 2 L-arginine + 3 NADPH + 4 O2 + H(+) = 2 L-citrulline + 2 nitric oxide + 3 NADP(+) + 4 H2O. Its activity is regulated as follows. Not stimulated by calcium/calmodulin. In terms of biological role, produces nitric oxide (NO) which is a messenger molecule with diverse functions throughout the body. In macrophages, NO mediates tumoricidal and bactericidal actions. Also has nitrosylase activity and mediates cysteine S-nitrosylation of cytoplasmic target proteins such PTGS2/COX2. As component of the iNOS-S100A8/9 transnitrosylase complex involved in the selective inflammatory stimulus-dependent S-nitrosylation of GAPDH implicated in regulation of the GAIT complex activity and probably multiple targets including ANXA5, EZR, MSN and VIM. Involved in inflammation, enhances the synthesis of pro-inflammatory mediators such as IL6 and IL8. In Oryctolagus cuniculus (Rabbit), this protein is Nitric oxide synthase, inducible (NOS2).